We begin with the raw amino-acid sequence, 244 residues long: 5-oxoprolinase subunit A (244 aa).

Belongs to the LamB/PxpA family. Forms a complex composed of PxpA, PxpB and PxpC.

It catalyses the reaction 5-oxo-L-proline + ATP + 2 H2O = L-glutamate + ADP + phosphate + H(+). Its function is as follows. Catalyzes the cleavage of 5-oxoproline to form L-glutamate coupled to the hydrolysis of ATP to ADP and inorganic phosphate. This chain is 5-oxoprolinase subunit A, found in Salmonella typhi.